A 314-amino-acid chain; its full sequence is tRNA dimethylallyltransferase (314 aa).

Residue 12–19 (GPTAAGKS) coordinates ATP. 14–19 (TAAGKS) contributes to the substrate binding site. Interaction with substrate tRNA regions lie at residues 37-40 (DSAT), 161-165 (QRIQR), and 245-250 (RCVGYR).

This sequence belongs to the IPP transferase family. Monomer. Requires Mg(2+) as cofactor.

The catalysed reaction is adenosine(37) in tRNA + dimethylallyl diphosphate = N(6)-dimethylallyladenosine(37) in tRNA + diphosphate. Its function is as follows. Catalyzes the transfer of a dimethylallyl group onto the adenine at position 37 in tRNAs that read codons beginning with uridine, leading to the formation of N6-(dimethylallyl)adenosine (i(6)A). The sequence is that of tRNA dimethylallyltransferase from Bordetella petrii (strain ATCC BAA-461 / DSM 12804 / CCUG 43448).